The primary structure comprises 417 residues: MLTQAPKGTKDILPSEVYKWHYIEKEIAKLCHDFGYKEIRIPVFEHTELFQRGVGDTTDIVQKEMYTFLDKGQRSITLRPEGTAGVVRSYIENGMASLPQPVKLYYNITAYRYENVQKGRYREFHQFGVEAFGAPGPSIDVEIISMVKLFFDRLGIKEISLNINSIGCPVCRAEYNKKLMDYLRPNLSKLCATCNTRFERNPLRIIDCKEESCKKITANAPALVENLCDDCKNHFEGLKAGLENLGIDYKIDKNIVRGLDYYTKTVFEFVSDNIGAQGTVCGGGRYDGLVEACGGKPTPGIGFAMGLERLLMVMENQGIKFPESKKPDIFIAAIGDKANSYAEKMVYELRKEGLSAEKDLMGKSLKAQMKYADKLGAKYSIALGDDEIESGKAVLKNMETGEQKEISLDTLISRLKM.

The protein belongs to the class-II aminoacyl-tRNA synthetase family. In terms of assembly, homodimer.

The protein localises to the cytoplasm. The catalysed reaction is tRNA(His) + L-histidine + ATP = L-histidyl-tRNA(His) + AMP + diphosphate + H(+). The chain is Histidine--tRNA ligase from Acetivibrio thermocellus (strain ATCC 27405 / DSM 1237 / JCM 9322 / NBRC 103400 / NCIMB 10682 / NRRL B-4536 / VPI 7372) (Clostridium thermocellum).